Here is a 338-residue protein sequence, read N- to C-terminus: Diacylglycerol acyltransferase/mycolyltransferase Ag85A (338 aa).

The first 42 residues, 1–42 (MQLVDRVRGAVTGMSRRLVVGAVGAALVSGLVGAVGGTATAG), serve as a signal peptide directing secretion. 85–86 (LR) provides a ligand contact to substrate. Residues 101–111 (FEWYDQSGLSV) are fibronectin-binding. A disulfide bridge links C130 with C135. Substrate contacts are provided by S169 and D197. S169 serves as the catalytic Nucleophile. E273 is an active-site residue. Residues 275 to 278 (FVRT), K282, and 305 to 307 (HSW) contribute to the substrate site. H305 is an active-site residue.

It belongs to the mycobacterial A85 antigen family. As to quaternary structure, homodimer.

Its subcellular location is the secreted. It localises to the cell wall. The protein localises to the cytoplasm. The catalysed reaction is an acyl-CoA + a 1,2-diacyl-sn-glycerol = a triacyl-sn-glycerol + CoA. It catalyses the reaction 2 alpha,alpha'-trehalose 6-mycolate = alpha,alpha'-trehalose 6,6'-bismycolate + alpha,alpha-trehalose. In terms of biological role, the antigen 85 proteins (FbpA, FbpB, FbpC) are responsible for the high affinity of mycobacteria for fibronectin, a large adhesive glycoprotein, which facilitates the attachment of M.tuberculosis to murine alveolar macrophages (AMs). They also help to maintain the integrity of the cell wall by catalyzing the transfer of mycolic acids to cell wall arabinogalactan, and through the synthesis of alpha,alpha-trehalose dimycolate (TDM, cord factor). They catalyze the transfer of a mycoloyl residue from one molecule of alpha,alpha-trehalose monomycolate (TMM) to another TMM, leading to the formation of TDM. FbpA mediates triacylglycerol (TAG) formation with long-chain acyl-CoA as the acyl donor and 1,2-dipalmitoyl-sn-glycerol (1,2-dipalmitin) as the acyl acceptor. It has a preference for C26:0-CoA over C18:1-CoA. This Mycobacterium bovis (strain ATCC BAA-935 / AF2122/97) protein is Diacylglycerol acyltransferase/mycolyltransferase Ag85A (fbpA).